The primary structure comprises 147 residues: Riboflavin kinase (147 aa).

CDP is bound at residue 15–20; that stretch reads GLGEGR. 2 residues coordinate Mg(2+): Thr-44 and Asn-46. Thr-97 and Glu-104 together coordinate FMN. 109–112 serves as a coordination point for CDP; the sequence is TELR.

The protein belongs to the archaeal riboflavin kinase family. The cofactor is Mg(2+).

The catalysed reaction is riboflavin + CTP = CDP + FMN + H(+). The protein operates within cofactor biosynthesis; FMN biosynthesis; FMN from riboflavin (CTP route): step 1/1. Its function is as follows. Catalyzes the CTP-dependent phosphorylation of riboflavin (vitamin B2) to form flavin mononucleotide (FMN). The sequence is that of Riboflavin kinase from Methanopyrus kandleri (strain AV19 / DSM 6324 / JCM 9639 / NBRC 100938).